We begin with the raw amino-acid sequence, 1066 residues long: Thyrotropin-releasing hormone-degrading ectoenzyme (1066 aa).

The span at 1 to 14 shows a compositional bias: basic and acidic residues; it reads MALDGERGEQEEEK. Positions 1–43 are disordered; the sequence is MALDGERGEQEEEKKKKKKKKKRKKKEEEGAEKSSSPFAATMG. Residues 1-81 are Cytoplasmic-facing; the sequence is MALDGERGEQ…ERHIAVHKRL (81 aa). Over residues 15–25 the composition is skewed to basic residues; that stretch reads KKKKKKKKRKK. Thr71 bears the Phosphothreonine; by PKC mark. Residues 82–102 form a helical; Signal-anchor for type II membrane protein membrane-spanning segment; the sequence is VLAFAVSIVALLAVTMLAVLL. The Extracellular portion of the chain corresponds to 103-1066; the sequence is SLRFDECGAS…FQWLGKAMRH (964 aa). Residues 118-176 form a disordered region; sequence TDGGLGGFPERDSNSSFPGSARRNHHAGGESSQRESGEVGTPGTPSAQPPSEEEREQWQ. N-linked (GlcNAc...) asparagine glycosylation is found at Asn131, Asn202, Asn217, Asn264, and Asn380. 446–450 lines the substrate pocket; the sequence is AAMEN. His482 provides a ligand contact to Zn(2+). The active-site Proton acceptor is Glu483. Zn(2+) contacts are provided by His486 and Glu505. 7 N-linked (GlcNAc...) asparagine glycosylation sites follow: Asn647, Asn676, Asn691, Asn705, Asn726, Asn842, and Asn948.

The protein belongs to the peptidase M1 family. Homodimer; disulfide-linked. Zn(2+) is required as a cofactor.

It is found in the membrane. The enzyme catalyses Release of the N-terminal pyroglutamyl group from pGlu-|-His-Xaa tripeptides and pGlu-|-His-Xaa-Gly tetrapeptides.. Functionally, specific inactivation of TRH after its release. This is Thyrotropin-releasing hormone-degrading ectoenzyme (Trhde) from Mus musculus (Mouse).